Consider the following 411-residue polypeptide: UPF0761 membrane protein PSPA7_4558 (411 aa).

A run of 6 helical transmembrane segments spans residues 36–56 (LFAV…IPAF), 92–112 (HLTW…LVTI), 132–152 (FLLY…GFAV), 174–194 (LLGL…YSAV), 207–229 (GGMF…VSLF), and 244–264 (IFLL…VLVC).

This sequence belongs to the UPF0761 family.

Its subcellular location is the cell inner membrane. The sequence is that of UPF0761 membrane protein PSPA7_4558 from Pseudomonas paraeruginosa (strain DSM 24068 / PA7) (Pseudomonas aeruginosa (strain PA7)).